Here is a 406-residue protein sequence, read N- to C-terminus: Cysteine desulfurase (406 aa).

An N6-(pyridoxal phosphate)lysine modification is found at Lys-226. Residue Cys-364 is the Cysteine persulfide intermediate of the active site.

It belongs to the class-V pyridoxal-phosphate-dependent aminotransferase family. Csd subfamily. As to quaternary structure, homodimer. Interacts with SufE and the SufBCD complex composed of SufB, SufC and SufD. The interaction with SufE is required to mediate the direct transfer of the sulfur atom from the S-sulfanylcysteine. Pyridoxal 5'-phosphate is required as a cofactor.

It localises to the cytoplasm. The enzyme catalyses (sulfur carrier)-H + L-cysteine = (sulfur carrier)-SH + L-alanine. The catalysed reaction is L-selenocysteine + AH2 = hydrogenselenide + L-alanine + A + H(+). Its pathway is cofactor biosynthesis; iron-sulfur cluster biosynthesis. Its function is as follows. Cysteine desulfurases mobilize the sulfur from L-cysteine to yield L-alanine, an essential step in sulfur metabolism for biosynthesis of a variety of sulfur-containing biomolecules. Component of the suf operon, which is activated and required under specific conditions such as oxidative stress and iron limitation. Acts as a potent selenocysteine lyase in vitro, that mobilizes selenium from L-selenocysteine. Selenocysteine lyase activity is however unsure in vivo. The polypeptide is Cysteine desulfurase (Escherichia coli O17:K52:H18 (strain UMN026 / ExPEC)).